Reading from the N-terminus, the 83-residue chain is Prolactin-releasing peptide (83 aa).

The first 21 residues, 1–21, serve as a signal peptide directing secretion; that stretch reads MALKTWLLCLLLLSLVLPGAS. The residue at position 52 (Phe52) is a Phenylalanine amide. A propeptide spanning residues 57 to 83 is cleaved from the precursor; the sequence is ATPRDVTGLGQLSCLPLDGRTKFSQRG.

Widely expressed, with highest levels in medulla oblongata and hypothalamus.

It localises to the secreted. In terms of biological role, stimulates prolactin (PRL) release and regulates the expression of prolactin through its receptor GPR10. May stimulate lactotrophs directly to secrete PRL. The chain is Prolactin-releasing peptide (Prlh) from Rattus norvegicus (Rat).